The following is a 336-amino-acid chain: DNA-directed RNA polymerase subunit alpha (336 aa).

The tract at residues 1–232 is alpha N-terminal domain (alpha-NTD); the sequence is MIQKNWQELI…DQLSVFVNFD (232 aa). Residues 248–336 form an alpha C-terminal domain (alpha-CTD) region; that stretch reads FNPALLKKVD…DLAKRYEDQY (89 aa).

This sequence belongs to the RNA polymerase alpha chain family. In terms of assembly, homodimer. The RNAP catalytic core consists of 2 alpha, 1 beta, 1 beta' and 1 omega subunit. When a sigma factor is associated with the core the holoenzyme is formed, which can initiate transcription.

The catalysed reaction is RNA(n) + a ribonucleoside 5'-triphosphate = RNA(n+1) + diphosphate. Functionally, DNA-dependent RNA polymerase catalyzes the transcription of DNA into RNA using the four ribonucleoside triphosphates as substrates. The polypeptide is DNA-directed RNA polymerase subunit alpha (Sinorhizobium fredii (strain NBRC 101917 / NGR234)).